The chain runs to 828 residues: Glycerol-3-phosphate acyltransferase (828 aa).

The short motif at 309 to 314 (CHRSHI) is the HXXXXD motif element.

This sequence belongs to the GPAT/DAPAT family.

Its subcellular location is the cell inner membrane. It carries out the reaction sn-glycerol 3-phosphate + an acyl-CoA = a 1-acyl-sn-glycero-3-phosphate + CoA. Its pathway is phospholipid metabolism; CDP-diacylglycerol biosynthesis; CDP-diacylglycerol from sn-glycerol 3-phosphate: step 1/3. The sequence is that of Glycerol-3-phosphate acyltransferase from Pseudomonas putida (strain GB-1).